A 370-amino-acid chain; its full sequence is Endopolygalacturonase A (370 aa).

Positions 1–19 (MPSAKPLFCLATLAGAALA) are cleaved as a signal peptide. The propeptide occupies 20-32 (APAPSRATDFNKR). An intrachain disulfide couples cysteine 35 to cysteine 50. PbH1 repeat units follow at residues 162–192 (SDNLVIEDVTIDNSDGDSEGGHNTDGFDISE), 193–214 (STYITITGATVKNQGDCVAINS), 215–235 (GENIYFSGGTCSGGHGLSIGS), 244–265 (VKNVTFIDSTVSDSENGVRIKT), 273–295 (VEDITYSNIQLSGISDYGIVIEQ), and 307–352 (SNGV…DITG). A disulfide bridge links cysteine 209 with cysteine 225. Histidine 229 is a catalytic residue. An N-linked (GlcNAc...) asparagine glycan is attached at asparagine 246. Intrachain disulfides connect cysteine 335–cysteine 340 and cysteine 359–cysteine 368.

Belongs to the glycosyl hydrolase 28 family.

The protein resides in the secreted. It catalyses the reaction (1,4-alpha-D-galacturonosyl)n+m + H2O = (1,4-alpha-D-galacturonosyl)n + (1,4-alpha-D-galacturonosyl)m.. In terms of biological role, involved in maceration and soft-rotting of plant tissue. Hydrolyzes the 1,4-alpha glycosidic bonds of de-esterified pectate in the smooth region of the plant cell wall. The protein is Endopolygalacturonase A (pgaA) of Aspergillus awamori (Black koji mold).